The primary structure comprises 444 residues: MGDFFASIWWMIVSFSVLVTFHEFGHYWVARRCGVKVLRFSIGFGTPLWSRRSSSGTEFVIGAIPLGGYVKMLDEREADVTVAERNQAFNRKSVWQRIAIVAAGPLANLLLCMLLLWVLFVIGKQDYSATVGRAEHLAAQAGIHPGDRITAIDGRQVTSWSEASMLLTAAAMDRQNAVLRVIGPYGERSEHTLELSKLKQPFDERHVTALVGINWQFMLQPPIIAKIEPGSIAEGAIKPGDIVLAVDGQQTLSTEDLYNQIQKLGRDGHPGMIEIRRGEERLALELSPRKSAQGVWLLGVKTNPGPVPAFDSQQRYGVLAAVPLAIRETGRMTADSLGMMKRIITGQASAKNISGPISIAKIANASAKRGVGWFIYFLSLLSLSLAIINLFPIPILDGGHLLYYAIELLKGSPLSTRAMAAGQYIGLALLAGLMGLAFYNDLLG.

His-22 contacts Zn(2+). Residue Glu-23 is part of the active site. Residue His-26 coordinates Zn(2+). A helical membrane pass occupies residues 98-120 (IAIVAAGPLANLLLCMLLLWVLF). The 85-residue stretch at 192 to 276 (TLELSKLKQP…DGHPGMIEIR (85 aa)) folds into the PDZ domain. The next 2 membrane-spanning stretches (helical) occupy residues 371–393 (VGWF…LFPI) and 418–440 (AMAA…AFYN).

Belongs to the peptidase M50B family. The cofactor is Zn(2+).

The protein resides in the cell inner membrane. The polypeptide is Putative zinc metalloprotease XF_1047 (Xylella fastidiosa (strain 9a5c)).